A 1257-amino-acid chain; its full sequence is Period circadian protein homolog 2 (1257 aa).

Residues 1-60 (MNGYVDFSPSPTSPTKEPGAPQPTQAVLQEDVDMSSGSSGNENCSTGRDSQGSDCDDNGK) form a disordered region. The segment covering 35–53 (SSGSSGNENCSTGRDSQGS) has biased composition (polar residues). The Nuclear export signal 1 motif lies at 109–118 (LIRTLKELKV). One can recognise a PAS 1 domain in the interval 179 to 246 (ITSEYIVKNA…FHSYTTPYKL (68 aa)). An LXXLL motif is present at residues 306 to 310 (LCCLL). One can recognise a PAS 2 domain in the interval 319–385 (YEAPRIPPEK…MLAIHKKILQ (67 aa)). The region spanning 393–436 (YSPIRFRTRNGEYITLDTSWSSFINPWSRKISFIIGRHKVRVGP) is the PAC domain. Positions 460–469 (LTEQIHRLLM) match the Nuclear export signal 2 motif. Disordered stretches follow at residues 471–565 (PVPH…GASL) and 617–638 (PSRK…PSKV). The important for protein stability stretch occupies residues 478 to 482 (SGYGS). Residues 493 to 504 (MSQTSSSDSNGQ) show a composition bias toward polar residues. The interval 510–709 (RRSGIFKTSG…GAAGGLSQEK (200 aa)) is CSNK1E binding domain. 5 positions are modified to phosphoserine: S525, S528, S531, S538, and S544. T554 is modified (phosphothreonine). 6 positions are modified to phosphoserine: S659, S693, S697, S706, S758, and S763. Residues 757–832 (RSRAQASDRG…SDTSQSSCPS (76 aa)) are disordered. Residues 778 to 794 (KKTGKNRKLKSKRVKTR) carry the Nuclear localization signal motif. Residues 779–792 (KTGKNRKLKSKRVK) are compositionally biased toward basic residues. The segment covering 821–832 (SPSDTSQSSCPS) has biased composition (low complexity). T858 is modified (phosphothreonine). An interaction with PPARG region spans residues 882–1067 (EFAVQPLPFA…DLCSATGSAL (186 aa)). S939 is modified (phosphoserine). The residue at position 964 (T964) is a Phosphothreonine. S971 carries the phosphoserine modification. Positions 983–990 (LQLNLLQL) match the Nuclear export signal 3 motif. Positions 994–1044 (PEGSTGAAGTLGTTGTAASGLDCTSGTSRDRQPKAPPTCNEPSDTQNSDAI) are disordered. The segment covering 996–1014 (GSTGAAGTLGTTGTAASGL) has biased composition (low complexity). The span at 1033 to 1044 (NEPSDTQNSDAI) shows a compositional bias: polar residues. The LXXLL motif lies at 1051–1055 (LNLLL). The span at 1070–1092 (SGASATSDSLGSSSLGFGTSQSG) shows a compositional bias: low complexity. Residues 1070–1115 (SGASATSDSLGSSSLGFGTSQSGAGSSDTSHTSKYFGSIDSSENNH) form a disordered region. A compositionally biased stretch (polar residues) spans 1093–1111 (AGSSDTSHTSKYFGSIDSS). The residue at position 1126 (S1126) is a Phosphoserine. The CRY binding domain stretch occupies residues 1157–1257 (SRDLQAVLKE…LTGPRIEAQT (101 aa)). The disordered stretch occupies residues 1224-1257 (PYEEDSPSPGLCDTSEAKEEEGEQLTGPRIEAQT).

As to quaternary structure, homodimer. Component of the circadian core oscillator, which includes the CRY proteins, CLOCK or NPAS2, BMAL1 or BMAL2, CSNK1D and/or CSNK1E, TIMELESS, and the PER proteins. Interacts with CLOCK-BMAL1 (off DNA). Interacts with BMAL2. Interacts directly with PER1 and PER3, and through a C-terminal domain, with CRY1 and CRY2. Interacts (via PAS 2 domain) with TIMELESS. Interacts with NFIL3. Different large complexes have been identified with different repressive functions. The core of PER complexes is composed of at least PER1, PER2, PER3, CRY1, CRY2, CSNK1D and/or CSNK1E. The large PER complex involved in the repression of transcriptional termination is composed of at least PER2, CDK9, DDX5, DHX9, NCBP1 and POLR2A (active). The large PER complex involved in the histone deacetylation is composed of at least HDAC1, PER2, SFPQ and SIN3A. The large PER complex involved in the histone methylation is composed of at least PER2, CBX3, TRIM28, SUV39H1 and/or SUV39H2; CBX3 mediates the formation of the complex. Interacts with SETX; the interaction inhibits termination of circadian target genes. Interacts with the nuclear receptors HNF4A, NR1D1, NR4A2, RORA, PPARA, PPARG and THRA; the interaction with at least PPARG is ligand dependent. Interacts with PML. Interacts (phosphorylated) with BTRC and FBXW11; the interactions trigger proteasomal degradation. Interacts with NONO and SFPQ. Interacts with CAVIN3. Interacts with MAGEL2. Interacts with MAP1LC3B. Interacts with HNF4A. In terms of processing, acetylated. Deacetylated by SIRT1, resulting in decreased protein stability. Deacetylated by SIRT6, preventing its degradation by the proteasome, resulting in increased protein stability. Phosphorylated by CSNK1E and CSNK1D. Phosphorylation results in PER2 protein degradation. May be dephosphorylated by PP1. Post-translationally, ubiquitinated, leading to its proteasomal degradation. Ubiquitination may be inhibited by CRY1. In the brain, high expression in SCN during the subjective day. Constitutive expression in the cornu ammonis and in the dentate gyrus of the hippocampus. Also expressed in the piriform cortex and the glomeruli of the olfactory bulb, and at a lower extent in the cerebral cortex. Not expressed in the pars tuberalis and the Purkinje neurons. Also expressed in adipose tissue (white and brown), heart, kidney, bladder, lumbar spinal cord, skeletal muscle, spleen, lung, pancreas and liver with highest levels in skeletal muscle and liver and lowest levels in spleen.

It localises to the nucleus. Its subcellular location is the cytoplasm. The protein resides in the perinuclear region. Functionally, transcriptional repressor which forms a core component of the circadian clock. The circadian clock, an internal time-keeping system, regulates various physiological processes through the generation of approximately 24 hour circadian rhythms in gene expression, which are translated into rhythms in metabolism and behavior. It is derived from the Latin roots 'circa' (about) and 'diem' (day) and acts as an important regulator of a wide array of physiological functions including metabolism, sleep, body temperature, blood pressure, endocrine, immune, cardiovascular, and renal function. Consists of two major components: the central clock, residing in the suprachiasmatic nucleus (SCN) of the brain, and the peripheral clocks that are present in nearly every tissue and organ system. Both the central and peripheral clocks can be reset by environmental cues, also known as Zeitgebers (German for 'timegivers'). The predominant Zeitgeber for the central clock is light, which is sensed by retina and signals directly to the SCN. The central clock entrains the peripheral clocks through neuronal and hormonal signals, body temperature and feeding-related cues, aligning all clocks with the external light/dark cycle. Circadian rhythms allow an organism to achieve temporal homeostasis with its environment at the molecular level by regulating gene expression to create a peak of protein expression once every 24 hours to control when a particular physiological process is most active with respect to the solar day. Transcription and translation of core clock components (CLOCK, NPAS2, BMAL1, BMAL2, PER1, PER2, PER3, CRY1 and CRY2) plays a critical role in rhythm generation, whereas delays imposed by post-translational modifications (PTMs) are important for determining the period (tau) of the rhythms (tau refers to the period of a rhythm and is the length, in time, of one complete cycle). A diurnal rhythm is synchronized with the day/night cycle, while the ultradian and infradian rhythms have a period shorter and longer than 24 hours, respectively. Disruptions in the circadian rhythms contribute to the pathology of cardiovascular diseases, cancer, metabolic syndrome and aging. A transcription/translation feedback loop (TTFL) forms the core of the molecular circadian clock mechanism. Transcription factors, CLOCK or NPAS2 and BMAL1 or BMAL2, form the positive limb of the feedback loop, act in the form of a heterodimer and activate the transcription of core clock genes and clock-controlled genes (involved in key metabolic processes), harboring E-box elements (5'-CACGTG-3') within their promoters. The core clock genes: PER1/2/3 and CRY1/2 which are transcriptional repressors form the negative limb of the feedback loop and interact with the CLOCK|NPAS2-BMAL1|BMAL2 heterodimer inhibiting its activity and thereby negatively regulating their own expression. This heterodimer also activates nuclear receptors NR1D1/2 and RORA/B/G, which form a second feedback loop and which activate and repress BMAL1 transcription, respectively. PER1 and PER2 proteins transport CRY1 and CRY2 into the nucleus with appropriate circadian timing, but also contribute directly to repression of clock-controlled target genes through interaction with several classes of RNA-binding proteins, helicases and others transcriptional repressors. PER appears to regulate circadian control of transcription by at least three different modes. First, interacts directly with the CLOCK-BMAL1 at the tail end of the nascent transcript peak to recruit complexes containing the SIN3-HDAC that remodel chromatin to repress transcription. Second, brings H3K9 methyltransferases such as SUV39H1 and SUV39H2 to the E-box elements of the circadian target genes, like PER2 itself or PER1. The recruitment of each repressive modifier to the DNA seems to be very precisely temporally orchestrated by the large PER complex, the deacetylases acting before than the methyltransferases. Additionally, large PER complexes are also recruited to the target genes 3' termination site through interactions with RNA-binding proteins and helicases that may play a role in transcription termination to regulate transcription independently of CLOCK-BMAL1 interactions. Recruitment of large PER complexes to the elongating polymerase at PER and CRY termination sites inhibited SETX action, impeding RNA polymerase II release and thereby repressing transcriptional reinitiation. May propagate clock information to metabolic pathways via the interaction with nuclear receptors. Coactivator of PPARA and corepressor of NR1D1, binds rhythmically at the promoter of nuclear receptors target genes like BMAL1 or G6PC1. Directly and specifically represses PPARG proadipogenic activity by blocking PPARG recruitment to target promoters and thereby transcriptional activation. Required for fatty acid and lipid metabolism, is involved as well in the regulation of circulating insulin levels. Plays an important role in the maintenance of cardiovascular functions through the regulation of NO and vasodilatatory prostaglandins production in aortas. Controls circadian glutamate uptake in synaptic vesicles through the regulation of VGLUT1 expression. May also be involved in the regulation of inflammatory processes. Represses the CLOCK-BMAL1 induced transcription of BHLHE40/DEC1 and ATF4. Negatively regulates the formation of the TIMELESS-CRY1 complex by competing with TIMELESS for binding to CRY1. The sequence is that of Period circadian protein homolog 2 (Per2) from Mus musculus (Mouse).